Reading from the N-terminus, the 121-residue chain is Type II secretion system protein I (121 aa).

The propeptide at 1-6 is leader sequence; that stretch reads MNKQKG. N-methylmethionine is present on Met-7. A helical membrane pass occupies residues 7–27; sequence MTLLEVLVALAIFSLAGLTLL.

It belongs to the GSP I family. As to quaternary structure, type II secretion is composed of four main components: the outer membrane complex, the inner membrane complex, the cytoplasmic secretion ATPase and the periplasm-spanning pseudopilus. Interacts with core component PulG. Interacts with pseudopilins PulJ and PulK. Cleaved by prepilin peptidase. Post-translationally, methylated by prepilin peptidase at the amino group of the N-terminal methionine once the leader sequence is cleaved by prepilin peptidase.

The protein localises to the cell inner membrane. Component of the type II secretion system required for the energy-dependent secretion of extracellular factors such as proteases and toxins from the periplasm. Part of the pseudopilus tip complex that is critical for the recognition and binding of secretion substrates. The polypeptide is Type II secretion system protein I (pulI) (Klebsiella michiganensis (strain ATCC 8724 / DSM 4798 / JCM 20051 / NBRC 3318 / NRRL B-199 / KCTC 1686 / BUCSAV 143 / CCM 1901)).